A 395-amino-acid polypeptide reads, in one-letter code: Calsequestrin-1 (395 aa).

A signal peptide spans Met-1–Gly-28. Tyr-37 is subject to Phosphotyrosine. Position 75 is a phosphoserine (Ser-75). Thr-118 is subject to Phosphothreonine. Residue Ser-210 is modified to Phosphoserine. N-linked (GlcNAc...) asparagine glycosylation occurs at Asn-344. The interval Glu-376–Asp-395 is disordered.

Belongs to the calsequestrin family. As to quaternary structure, monomer; increases in response to a depletion of intracellular calcium. Homodimer. Homotetramer and homopolymer. Can form linear homooligomers. Ca(2+) ions promote oligomerization. Interacts (via C-terminal end and preferentially with the monomeric form) with STIM1; this interaction increases in response to a depletion of intracellular calcium, decreases both STIM1 aggregation and clustering, interaction of STIM1 with ORAI1 and store-operated Ca(2+) entry (SOCE) activity. Interacts with ASPH and TRDN. Post-translationally, N-glycosylated. In terms of tissue distribution, detected in skeletal muscle (at protein level). Detected in skeletal muscle.

The protein localises to the endoplasmic reticulum. It is found in the sarcoplasmic reticulum. Its subcellular location is the sarcoplasmic reticulum lumen. The protein resides in the mitochondrion matrix. It localises to the sarcoplasmic reticulum membrane. Its function is as follows. Calsequestrin is a high-capacity, moderate affinity, calcium-binding protein and thus acts as an internal calcium store in muscle. Calcium ions are bound by clusters of acidic residues at the protein surface, often at the interface between subunits. Can bind around 80 Ca(2+) ions. Regulates the release of lumenal Ca(2+) via the calcium release channel RYR1; this plays an important role in triggering muscle contraction. Negatively regulates store-operated Ca(2+) entry (SOCE) activity. The chain is Calsequestrin-1 (CASQ1) from Oryctolagus cuniculus (Rabbit).